We begin with the raw amino-acid sequence, 873 residues long: Alanine--tRNA ligase (873 aa).

Zn(2+) contacts are provided by H559, H563, C661, and H665.

This sequence belongs to the class-II aminoacyl-tRNA synthetase family. Zn(2+) serves as cofactor.

The protein resides in the cytoplasm. It carries out the reaction tRNA(Ala) + L-alanine + ATP = L-alanyl-tRNA(Ala) + AMP + diphosphate. Functionally, catalyzes the attachment of alanine to tRNA(Ala) in a two-step reaction: alanine is first activated by ATP to form Ala-AMP and then transferred to the acceptor end of tRNA(Ala). Also edits incorrectly charged Ser-tRNA(Ala) and Gly-tRNA(Ala) via its editing domain. The chain is Alanine--tRNA ligase from Acaryochloris marina (strain MBIC 11017).